Here is a 138-residue protein sequence, read N- to C-terminus: Ribulose bisphosphate carboxylase small subunit (138 aa).

It belongs to the RuBisCO small chain family. In terms of assembly, heterohexadecamer of 8 large and 8 small subunits.

It localises to the plastid. The protein resides in the chloroplast. Functionally, ruBisCO catalyzes two reactions: the carboxylation of D-ribulose 1,5-bisphosphate, the primary event in carbon dioxide fixation, as well as the oxidative fragmentation of the pentose substrate in the photorespiration process. Both reactions occur simultaneously and in competition at the same active site. Although the small subunit is not catalytic it is essential for maximal activity. The polypeptide is Ribulose bisphosphate carboxylase small subunit (Pyropia yezoensis (Susabi-nori)).